The following is an 86-amino-acid chain: Small ribosomal subunit protein bS20 (86 aa).

The interval 1 to 25 (MANIKSQIKRNKQNEKRHERNKAVK) is disordered. Positions 12–22 (KQNEKRHERNK) are enriched in basic and acidic residues.

Belongs to the bacterial ribosomal protein bS20 family.

Its function is as follows. Binds directly to 16S ribosomal RNA. The sequence is that of Small ribosomal subunit protein bS20 from Nocardioides sp. (strain ATCC BAA-499 / JS614).